A 285-amino-acid polypeptide reads, in one-letter code: MMSDYSWFEGIPLPDMWVQKEIVEDVHNKFVVKDEDLIILTYPKSGTNWLIEIVCLIQTKGDPKWIQSVPNWERSPWLESKSGYSVLTSKEGPRLMTSHLPIHLFSKSFFSSKAKVIYLIRNPRDVLVSGYFFWANTNLVKNLESLGIYFEQFLKGNVRYGSWFEHIHGWLSMRERNNFLVLYYEDMKKDAKGTIKKICDFLGKNLGPDELDLVLKYSSFQAMKENNMSNYSLIKEDQITNGLKLMRKGTTGDWKNHFTVAQTEAFDKVFQDKMVGFPPGMFPWE.

A 3'-phosphoadenylyl sulfate-binding site is contributed by 44–49; the sequence is KSGTNW. Histidine 99 acts as the Proton acceptor in catalysis. 3'-phosphoadenylyl sulfate-binding positions include arginine 121, serine 129, tyrosine 184, 218 to 223, and 247 to 249; these read SSFQAM and RKG.

This sequence belongs to the sulfotransferase 1 family. In terms of assembly, oligomer.

The protein resides in the cytoplasm. It localises to the cytosol. It carries out the reaction an alcohol + 3'-phosphoadenylyl sulfate = an alkyl sulfate + adenosine 3',5'-bisphosphate + H(+). It catalyses the reaction glycolithocholate + 3'-phosphoadenylyl sulfate = sulfoglycolithocholate + adenosine 3',5'-bisphosphate + H(+). The enzyme catalyses taurolithocholate + 3'-phosphoadenylyl sulfate = taurolithocholate 3-sulfate + adenosine 3',5'-bisphosphate + H(+). The catalysed reaction is 3beta-hydroxyandrost-5-en-17-one + 3'-phosphoadenylyl sulfate = dehydroepiandrosterone 3-sulfate + adenosine 3',5'-bisphosphate + H(+). In terms of biological role, sulfotransferase that utilizes 3'-phospho-5'-adenylyl sulfate (PAPS) as sulfonate donor to catalyze the sulfonation of the hydroxyl group of hydroxysteroids and bile acids. This Mus musculus (Mouse) protein is Sulfotransferase 2A6.